Here is a 144-residue protein sequence, read N- to C-terminus: Large ribosomal subunit protein uL15 (144 aa).

Residues 1–56 (MELNNLKPAAGAKHAKRRVGRGIGSGLGKTAGRGHKGQKSRSGGFHKVGFEGGQMP) are disordered. Over residues 21–31 (RGIGSGLGKTA) the composition is skewed to gly residues.

Belongs to the universal ribosomal protein uL15 family. In terms of assembly, part of the 50S ribosomal subunit.

Binds to the 23S rRNA. The protein is Large ribosomal subunit protein uL15 of Burkholderia ambifaria (strain MC40-6).